Consider the following 69-residue polypeptide: Cecropin-like peptide 1 (69 aa).

The signal sequence occupies residues 1 to 23 (MNFTKLFVVFAVVLVAFAGQSEA). Glutamine 68 carries the post-translational modification Glutamine amide.

Following bacterial infection, expressed in fat body, trachea and muscle.

It localises to the secreted. Its function is as follows. Antimicrobial peptide active against Gram-negative bacteria E.coli KCCM 11234 (MIC&lt;=1.03 uM), E.aerogenes KCCM 12177 (MIC&lt;=2.07 uM) and P.aeruginosa KCCM 11328 (MIC&lt;=2.07 uM). Not active against various Gram-positive bacteria at concentrations up to 4.14 uM. The sequence is that of Cecropin-like peptide 1 from Hermetia illucens (Black soldier fly).